Reading from the N-terminus, the 241-residue chain is Triosephosphate isomerase (241 aa).

Substrate is bound at residue 9–11 (NWK). The active-site Electrophile is the histidine 96. Residue glutamate 165 is the Proton acceptor of the active site. Residues glycine 171, serine 204, and 225 to 226 (GG) contribute to the substrate site.

Belongs to the triosephosphate isomerase family. Homodimer.

Its subcellular location is the cytoplasm. The catalysed reaction is D-glyceraldehyde 3-phosphate = dihydroxyacetone phosphate. It participates in carbohydrate biosynthesis; gluconeogenesis. Its pathway is carbohydrate degradation; glycolysis; D-glyceraldehyde 3-phosphate from glycerone phosphate: step 1/1. Its function is as follows. Involved in the gluconeogenesis. Catalyzes stereospecifically the conversion of dihydroxyacetone phosphate (DHAP) to D-glyceraldehyde-3-phosphate (G3P). The protein is Triosephosphate isomerase of Nostoc sp. (strain PCC 7120 / SAG 25.82 / UTEX 2576).